The sequence spans 173 residues: MAIRRILTVDNAADLAVLKQVSKDVPAVDDALRGLMDDMLETMYDAPGIGLAAVQVGELVNVIVMDLAREGEEPAPRYFVNPKITWASEELFEYEEGCLSVPEVYDAVERPAKVKISYLNYQGEAVEEDAEELFAVCIQHEMDHLKGVLFIDHLSRLKRDRAISKVKKARRAA.

Fe cation contacts are provided by Cys-98 and His-140. Residue Glu-141 is part of the active site. His-144 contributes to the Fe cation binding site.

This sequence belongs to the polypeptide deformylase family. Requires Fe(2+) as cofactor.

It carries out the reaction N-terminal N-formyl-L-methionyl-[peptide] + H2O = N-terminal L-methionyl-[peptide] + formate. Removes the formyl group from the N-terminal Met of newly synthesized proteins. Requires at least a dipeptide for an efficient rate of reaction. N-terminal L-methionine is a prerequisite for activity but the enzyme has broad specificity at other positions. This is Peptide deformylase from Caulobacter sp. (strain K31).